The primary structure comprises 538 residues: Non-specific phospholipase C4 (538 aa).

A disordered region spans residues 91–112 (KPWDSGKPDPNPGHPNMSGFAQ).

It belongs to the bacterial phospholipase C family. As to expression, expressed in root tips, cotyledons, on leaf margins, stems, young anthers and funiculus.

It localises to the cell membrane. The catalysed reaction is a 1,2-diacyl-sn-glycero-3-phosphocholine + H2O = phosphocholine + a 1,2-diacyl-sn-glycerol + H(+). Functionally, non-specific phospholipase C (PLC) which assumes major PLC activity during inorganic phosphate starvation. Substrate preference is phosphatidylcholine (PC), but can also hydrolyze phosphatidylethanolamine (PE) with lower efficiency. Has no activity toward phosphatidic acid (PA). Plays an important role in the supply of both inorganic phosphate and diacylglycerol from membrane-localized phospholipids during phosphate deprivation. May be required for lipid-derived signaling molecules that positively modulate abscisic acid (ABA) response and promote plant tolerance to drought and salt stresses. May be involved in brassinolide-mediated signaling in root development. This chain is Non-specific phospholipase C4 (NPC4), found in Arabidopsis thaliana (Mouse-ear cress).